Consider the following 193-residue polypeptide: Anthranilate synthase component 2 (193 aa).

Positions 3 to 193 (DILLLDNVDS…EQTLAWALAK (191 aa)) constitute a Glutamine amidotransferase type-1 domain. 57-59 (GPG) provides a ligand contact to L-glutamine. Residue cysteine 84 is the Nucleophile; for GATase activity of the active site. Residues glutamine 88 and 134 to 135 (SL) each bind L-glutamine. Active-site for GATase activity residues include histidine 170 and glutamate 172.

Heterotetramer consisting of two non-identical subunits: a beta subunit (TrpG) and a large alpha subunit (TrpE).

The enzyme catalyses chorismate + L-glutamine = anthranilate + pyruvate + L-glutamate + H(+). Its pathway is amino-acid biosynthesis; L-tryptophan biosynthesis; L-tryptophan from chorismate: step 1/5. Functionally, part of a heterotetrameric complex that catalyzes the two-step biosynthesis of anthranilate, an intermediate in the biosynthesis of L-tryptophan. In the first step, the glutamine-binding beta subunit (TrpG) of anthranilate synthase (AS) provides the glutamine amidotransferase activity which generates ammonia as a substrate that, along with chorismate, is used in the second step, catalyzed by the large alpha subunit of AS (TrpE) to produce anthranilate. In the absence of TrpG, TrpE can synthesize anthranilate directly from chorismate and high concentrations of ammonia. This chain is Anthranilate synthase component 2 (trpG), found in Serratia marcescens.